A 313-amino-acid polypeptide reads, in one-letter code: PDZ domain-containing protein GIPC2 (313 aa).

The segment covering K14–A27 has biased composition (basic and acidic residues). The segment at K14–S34 is disordered. The PDZ domain maps to E117–E197.

It belongs to the GIPC family. As to quaternary structure, probably interacts with SEMA5A.

The protein localises to the cytoplasm. The polypeptide is PDZ domain-containing protein GIPC2 (GIPC2) (Bos taurus (Bovine)).